The primary structure comprises 1556 residues: Lysine-specific demethylase 5C (1556 aa).

The region spanning 14-55 (CPVFEPSWAEFRDPLGYIAKIRPIAEKSGICKIRPPADWQPP) is the JmjN domain. In terms of domain architecture, ARID spans 79 to 169 (TRVKLNYLDQ…IVYPYEMYQS (91 aa)). Over residues 197–207 (LRQSVQPSKFN) the composition is skewed to polar residues. The segment at 197 to 227 (LRQSVQPSKFNSYGRRAKRLQPDPEPTEEDI) is disordered. Glycyl lysine isopeptide (Lys-Gly) (interchain with G-Cter in SUMO2) cross-links involve residues Lys205, Lys229, Lys244, and Lys274. The segment at 257–303 (LRKKDKEGPECPPTVVVKEESGGDVKVESTSPKTFLESKEELSHSPE) is disordered. Residues 273-283 (VKEESGGDVKV) are compositionally biased toward basic and acidic residues. A Phosphoserine modification is found at Ser287. Residue Lys295 forms a Glycyl lysine isopeptide (Lys-Gly) (interchain with G-Cter in SUMO2) linkage. A phosphoserine mark is found at Ser301 and Ser317. Residues 324 to 374 (SYVCRMCSRGDEDDKLLLCDGCDDNYHIFCLLPPLPEIPKGVWRCPKCVMA) form a PHD-type 1 zinc finger. In terms of domain architecture, JmjC spans 468–634 (EYATSGWNLN…AGRQCIEHYR (167 aa)). Positions 514, 517, and 602 each coordinate Fe cation. Ser893 and Ser897 each carry phosphoserine. Lys1127 participates in a covalent cross-link: Glycyl lysine isopeptide (Lys-Gly) (interchain with G-Cter in SUMO2). The PHD-type 2 zinc finger occupies 1185 to 1250 (TSVCVCGQVP…KFLCPLCMRS (66 aa)). Disordered regions lie at residues 1315-1362 (LQAE…SPEK) and 1441-1556 (ERHG…QQQL). The span at 1335 to 1345 (PLREGSGKDMP) shows a compositional bias: basic and acidic residues. Phosphoserine is present on Ser1359. Basic residues predominate over residues 1445 to 1460 (SRARGRALERRRRRKV). Residues 1461-1478 (DRGGEGDDPAREELEPKR) are compositionally biased toward basic and acidic residues. The segment covering 1485–1500 (EAEEAQEEEELEEETG) has biased composition (acidic residues). Polar residues-rich tracts occupy residues 1513-1522 (SPSTQENQNG) and 1530-1540 (SGPSAPFSTLS). A compositionally biased stretch (low complexity) spans 1541–1556 (PQLHVPCPQQPPQQQL).

The protein belongs to the JARID1 histone demethylase family. As to quaternary structure, part of two distinct complexes, one containing E2F6, and the other containing REST. Interacts with ZMYND8. Fe(2+) is required as a cofactor.

The protein resides in the nucleus. The catalysed reaction is N(6),N(6),N(6)-trimethyl-L-lysyl(4)-[histone H3] + 3 2-oxoglutarate + 3 O2 = L-lysyl(4)-[histone H3] + 3 formaldehyde + 3 succinate + 3 CO2. Its function is as follows. Histone demethylase that specifically demethylates 'Lys-4' of histone H3, thereby playing a central role in histone code. Does not demethylate histone H3 'Lys-9', H3 'Lys-27', H3 'Lys-36', H3 'Lys-79' or H4 'Lys-20'. Demethylates trimethylated and dimethylated but not monomethylated H3 'Lys-4'. Participates in transcriptional repression of neuronal genes by recruiting histone deacetylases and REST at neuron-restrictive silencer elements. Represses the CLOCK-BMAL1 heterodimer-mediated transcriptional activation of the core clock component PER2. This Canis lupus familiaris (Dog) protein is Lysine-specific demethylase 5C (KDM5C).